The primary structure comprises 300 residues: UDP-N-acetylenolpyruvoylglucosamine reductase (300 aa).

The FAD-binding PCMH-type domain maps to 28-193 (KTGGPADVLA…LQATFALEKG (166 aa)). Residue Arg-172 is part of the active site. The active-site Proton donor is the Ser-222. Glu-292 is an active-site residue.

The protein belongs to the MurB family. The cofactor is FAD.

The protein resides in the cytoplasm. The enzyme catalyses UDP-N-acetyl-alpha-D-muramate + NADP(+) = UDP-N-acetyl-3-O-(1-carboxyvinyl)-alpha-D-glucosamine + NADPH + H(+). The protein operates within cell wall biogenesis; peptidoglycan biosynthesis. Cell wall formation. In Enterococcus faecalis (strain ATCC 700802 / V583), this protein is UDP-N-acetylenolpyruvoylglucosamine reductase.